The sequence spans 604 residues: Sulfite reductase [NADPH] flavoprotein alpha-component (604 aa).

One can recognise a Flavodoxin-like domain in the interval Val-66–Ala-204. Residues Ser-72–Ala-77, Ser-119–Gly-122, and Leu-155–Cys-164 each bind FMN. Residues Ala-239–Pro-453 form the FAD-binding FR-type domain. Residues Thr-327, Gln-361, Arg-391–Ser-394, Thr-409–Gly-411, and Gly-424–Ser-427 each bind FAD. Residues Ser-524 to Arg-525, Lys-530 to Gln-534, and Asp-566 each bind NADP(+). An FAD-binding site is contributed by Tyr-604.

Belongs to the NADPH-dependent sulphite reductase flavoprotein subunit CysJ family. It in the N-terminal section; belongs to the flavodoxin family. This sequence in the C-terminal section; belongs to the flavoprotein pyridine nucleotide cytochrome reductase family. As to quaternary structure, alpha(8)-beta(8). The alpha component is a flavoprotein, the beta component is a hemoprotein. The cofactor is FAD. Requires FMN as cofactor.

The enzyme catalyses hydrogen sulfide + 3 NADP(+) + 3 H2O = sulfite + 3 NADPH + 4 H(+). Its pathway is sulfur metabolism; hydrogen sulfide biosynthesis; hydrogen sulfide from sulfite (NADPH route): step 1/1. Its function is as follows. Component of the sulfite reductase complex that catalyzes the 6-electron reduction of sulfite to sulfide. This is one of several activities required for the biosynthesis of L-cysteine from sulfate. The flavoprotein component catalyzes the electron flow from NADPH -&gt; FAD -&gt; FMN to the hemoprotein component. This chain is Sulfite reductase [NADPH] flavoprotein alpha-component, found in Neisseria meningitidis serogroup C (strain 053442).